A 315-amino-acid chain; its full sequence is MPDIKLFTGNATPELAKRISERLYLSLGDATVGRFSDGEIQVQINENVRGSDVFIIQSTCAPTNDNLMELIVMVDALRRASAGRITAVIPYFGYARQDRRVRSARVPITAKVVADFLSSVGVDRVLTCDLHAEQIQGFFDVPVDNVFGSPVLVHDMLKKIDMQNPIVVSPDIGGVVRARAIAKLLNDTDMAIIDKRRPRANVAQVMHIIGDVAGRDCILVDDMIDTGGTLCKAAEALKERGAKRVFAYATHAVFSGSAAKNLASDALDEVVVTDTIPLSPEIKALNKVRVLTLSGMLAEAIRRISNEESISAMFT.

ATP-binding positions include 37–39 (DGE) and 96–97 (RQ). Residues H131 and D171 each coordinate Mg(2+). K195 is an active-site residue. D-ribose 5-phosphate is bound by residues R197, D221, and 225–229 (DTGGT).

It belongs to the ribose-phosphate pyrophosphokinase family. Class I subfamily. As to quaternary structure, homohexamer. The cofactor is Mg(2+).

The protein resides in the cytoplasm. The enzyme catalyses D-ribose 5-phosphate + ATP = 5-phospho-alpha-D-ribose 1-diphosphate + AMP + H(+). It functions in the pathway metabolic intermediate biosynthesis; 5-phospho-alpha-D-ribose 1-diphosphate biosynthesis; 5-phospho-alpha-D-ribose 1-diphosphate from D-ribose 5-phosphate (route I): step 1/1. Its function is as follows. Involved in the biosynthesis of the central metabolite phospho-alpha-D-ribosyl-1-pyrophosphate (PRPP) via the transfer of pyrophosphoryl group from ATP to 1-hydroxyl of ribose-5-phosphate (Rib-5-P). The sequence is that of Ribose-phosphate pyrophosphokinase from Pasteurella multocida (strain Pm70).